A 1674-amino-acid polypeptide reads, in one-letter code: Kinesin-like protein KIF21A (1674 aa).

The residue at position 1 (Met-1) is an N-acetylmethionine. One can recognise a Kinesin motor domain in the interval 9-371 (SVRVAVRIRP…LKYANRARNI (363 aa)). ATP is bound at residue 88–95 (GQTGAGKT). Residues 365–575 (ANRARNIKNK…NREERSVAGK (211 aa)) are a coiled coil. At Ser-524 the chain carries Phosphoserine. Disordered regions lie at residues 556-641 (KKRL…DEKA), 779-804 (EEQE…DQRK), and 841-881 (SDKV…AQQK). The span at 560–597 (QKLEESNREERSVAGKEDNTDTDQEKKEEKGVSERENN) shows a compositional bias: basic and acidic residues. The segment covering 598–637 (ELEVEESQEVSDHEDEEEEEEEEEDDIDGGESSDESDSES) has biased composition (acidic residues). Residues 851–865 (KLSSSDAPAQDTGSS) are compositionally biased toward polar residues. 2 coiled-coil regions span residues 931–1019 (TDII…AKEE) and 1053–1083 (LQAA…NQLL). The interval 1116–1138 (VEDSTDEDAPLNSPGSEGSTLSS) is disordered. Positions 1128–1138 (SPGSEGSTLSS) are enriched in polar residues. The tract at residues 1146-1167 (EVKPKNKARRRTTTQMELLYAD) is interaction with KANK1 and KANK2. 2 stretches are compositionally biased toward polar residues: residues 1170–1179 (ELASDTSTGD) and 1196–1205 (GMNTETSGTS). The interval 1170 to 1318 (ELASDTSTGD…SSLSEVHRSS (149 aa)) is disordered. Phosphoserine occurs at positions 1212, 1225, 1229, and 1239. Residues 1245–1262 (KAYEKAEKSKAKEQKHSD) are compositionally biased toward basic and acidic residues. Over residues 1288-1297 (NRLTVSQGNT) the composition is skewed to polar residues. 7 WD repeats span residues 1345–1382 (GHTK…EIMS), 1385–1423 (GHPN…KCIR), 1449–1487 (SGEN…STGK), 1490–1532 (GHLG…LGTV), 1541–1578 (PHYD…LLQQ), 1582–1621 (AHKD…PVGE), and 1624–1661 (GHDS…DGQI). Position 1662 is a phosphoserine (Ser-1662). Thr-1664 is modified (phosphothreonine). Ser-1673 carries the post-translational modification Phosphoserine.

It belongs to the TRAFAC class myosin-kinesin ATPase superfamily. Kinesin family. In terms of assembly, part of a cortical microtubule stabilization complex (CMSC) composed of KANK1, PPFIA1, PPFIBP1, ERC1/ELKS, PHLDB2/LL5beta, CLASPs, KIF21A and possibly additional interactors; within CMSCs KANK1 and PHLDB2/LL5beta seem to be the core components for recruiting microtubule-binding proteins KIF21A and CLASPs, whereas PPFIA1, PPFIBP1 and ERC1/ELKS serve as scaffolds for protein clustering. Interacts (via residues 1146-1167) with KANK1 (via ankyrin repeats 1-5) and KANK2 (via ankyrin repeats 1-5).

Its subcellular location is the cytoplasm. The protein resides in the cytoskeleton. It localises to the cell cortex. It is found in the cell projection. The protein localises to the axon. Its subcellular location is the dendrite. The protein resides in the growth cone. Its function is as follows. Processive microtubule plus-end directed motor protein involved in neuronal axon guidance. Is recruited by KANK1 to cortical microtubule stabilizing complexes (CMSCs) at focal adhesions (FAs) rims where it promotes microtubule capture and stability. Controls microtubule polymerization rate at axonal growth cones and suppresses microtubule growth without inducing microtubule disassembly once it reaches the cell cortex. The sequence is that of Kinesin-like protein KIF21A (KIF21A) from Homo sapiens (Human).